A 454-amino-acid chain; its full sequence is MVTLEEALKFSKEEIINLKKELNQKAKEQKHLGAYVEQFLDKDLSESGDGVPVAIKDNISVKDWELTCASKILQGYVAPYDASVITNLRKNNLSPFGRCNMDEFAMGSTSATSFYGKTLNPHDNTKVPGGSSGGSAAAVASGLAIASLGSDTGGSVRQPAAFCGCVGFKPSYGRVSRYGLAAYSSSLDQIGVLTQNVKDAAILYDVIAGYDEKDSTSANIAFEPTAPKLNANKKLKIAVIKNYIDQTNDDVKQALLKTIDMLKANGYEIVYKDLMDSTFDVAAYYIIAAAEASANLSRYDGVRYGRRSEKCDNLSQMYINSRSEGFGEEVKRRILLGTFVLSSGYYDAYYIKAQKARRFIKQKYEEILNDCDLIFMPVAPSVAFGFNDVKTPIQMYLEDVFTISVNLAGLGGISVPVGKNENGLNISAQLICKAYDEQTLLDGALSLEEIIKNK.

Active-site charge relay system residues include K56 and S131. The active-site Acyl-ester intermediate is S155.

This sequence belongs to the amidase family. GatA subfamily. In terms of assembly, heterotrimer of A, B and C subunits.

The catalysed reaction is L-glutamyl-tRNA(Gln) + L-glutamine + ATP + H2O = L-glutaminyl-tRNA(Gln) + L-glutamate + ADP + phosphate + H(+). In terms of biological role, allows the formation of correctly charged Gln-tRNA(Gln) through the transamidation of misacylated Glu-tRNA(Gln) in organisms which lack glutaminyl-tRNA synthetase. The reaction takes place in the presence of glutamine and ATP through an activated gamma-phospho-Glu-tRNA(Gln). This Campylobacter lari (strain RM2100 / D67 / ATCC BAA-1060) protein is Glutamyl-tRNA(Gln) amidotransferase subunit A.